The following is a 161-amino-acid chain: Lipoprotein signal peptidase (161 aa).

The next 4 helical transmembrane spans lie at 11–31 (PLFW…KLWV), 44–64 (LWSG…FSAF), 66–86 (GGAG…IIFA), and 100–120 (GCIL…GHVI). Active-site residues include Asp-121 and Asp-137. The chain crosses the membrane as a helical span at residues 135–155 (LADVSINIGIAALLWASFFPV).

The protein belongs to the peptidase A8 family.

Its subcellular location is the cell inner membrane. The enzyme catalyses Release of signal peptides from bacterial membrane prolipoproteins. Hydrolyzes -Xaa-Yaa-Zaa-|-(S,diacylglyceryl)Cys-, in which Xaa is hydrophobic (preferably Leu), and Yaa (Ala or Ser) and Zaa (Gly or Ala) have small, neutral side chains.. It participates in protein modification; lipoprotein biosynthesis (signal peptide cleavage). Its function is as follows. This protein specifically catalyzes the removal of signal peptides from prolipoproteins. This is Lipoprotein signal peptidase from Synechocystis sp. (strain ATCC 27184 / PCC 6803 / Kazusa).